A 579-amino-acid chain; its full sequence is Putative laccase-9 (579 aa).

The first 27 residues, 1–27 (MGTAKLPALLWLLAGVVLALAVNPAHG), serve as a signal peptide directing secretion. 2 Plastocyanin-like domains span residues 36–152 (FITE…PKRG) and 162–319 (KEIP…YTDS). N-linked (GlcNAc...) asparagine glycans are attached at residues Asn41 and Asn82. Cu cation contacts are provided by His86 and His88. An N-linked (GlcNAc...) asparagine glycan is attached at Asn114. Positions 131 and 133 each coordinate Cu cation. N-linked (GlcNAc...) asparagine glycans are attached at residues Asn307, Asn405, and Asn446. A Plastocyanin-like 3 domain is found at 436 to 563 (PTAFVDPPVN…DTVFIVKDGK (128 aa)). Residues His480, His483, and His485 each coordinate Cu cation. N-linked (GlcNAc...) asparagine glycosylation occurs at Asn496. Cu cation-binding residues include His542, Cys543, His544, His548, and Met553.

It belongs to the multicopper oxidase family. Cu cation serves as cofactor.

It is found in the secreted. The protein resides in the extracellular space. It localises to the apoplast. It carries out the reaction 4 hydroquinone + O2 = 4 benzosemiquinone + 2 H2O. In terms of biological role, lignin degradation and detoxification of lignin-derived products. The chain is Putative laccase-9 (LAC9) from Oryza sativa subsp. japonica (Rice).